Consider the following 340-residue polypeptide: Uroporphyrinogen decarboxylase (340 aa).

Residues 21-25, Asp71, Tyr147, Ser202, and His315 contribute to the substrate site; that span reads RQAGR.

This sequence belongs to the uroporphyrinogen decarboxylase family. In terms of assembly, homodimer.

The protein localises to the cytoplasm. The enzyme catalyses uroporphyrinogen III + 4 H(+) = coproporphyrinogen III + 4 CO2. Its pathway is porphyrin-containing compound metabolism; protoporphyrin-IX biosynthesis; coproporphyrinogen-III from 5-aminolevulinate: step 4/4. Functionally, catalyzes the decarboxylation of four acetate groups of uroporphyrinogen-III to yield coproporphyrinogen-III. The sequence is that of Uroporphyrinogen decarboxylase from Nautilia profundicola (strain ATCC BAA-1463 / DSM 18972 / AmH).